A 390-amino-acid polypeptide reads, in one-letter code: MPNPEASLSPRSARYPKASMHVVPMLAPNDTAAFRALFASGAVDPASVVALIAKSEGSGLHNDHARVFADVSLRTALAEARGCPVEDLADSVTVAVSGGSPGVISPHVTVVTQEWVADLPAGLPGVGLVVGRGHTEPILPEDIGRTAQVDKVADAVAAAMLDAGVTDPDDVHLVMVKGPALSSRAVADALSRGKTVVTGDYGIGPMGSMCWSNDASALGVAVALGEVKRDLVADDRIRSDWDLFSAVAATSSGGEKRGGEVLLLANSAQSASELRIGHGITRDMADTEGIKTAIRTAGVDFDCCLSPAQQAQVVQVFGKFVLPGSDVLRGQHITALDDHEAHHVAKAVGGALVVSITGQPMSFISGGERNSHMGPPGGNPVAAVVRRLPA.

An RU A region spans residues 1-118; it reads MPNPEASLSP…TVVTQEWVAD (118 aa). Residues R66 and 97–98 contribute to the substrate site; that span reads SG. Residues 127-268 form an RU B region; it reads GLVVGRGHTE…GEVLLLANSA (142 aa). K177 is a catalytic residue. Substrate-binding positions include N213, 251–252, K346, and 365–366; these read SS and SG. The Nucleophile role is filled by S251. The segment at 274–390 is RU C; sequence LRIGHGITRD…VAAVVRRLPA (117 aa).

This sequence belongs to the cyclic amide hydrolase (CyAH) family. Homotetramer; disulfide-linked. The disulfide forms between 2 monomers in the tetramer, such that each tetramer contains 2 sets of vicinal disulfides.

In terms of biological role, cyclic amide hydrolase of unknown substrate specificity. Catalyzes the hydrolytic ring-opening of a cyclic amide. Does not act on cyanuric acid nor barbituric acid. This chain is Cyclic amide hydrolase, found in Pseudofrankia inefficax (strain DSM 45817 / CECT 9037 / DDB 130130 / EuI1c) (Frankia inefficax).